Here is a 354-residue protein sequence, read N- to C-terminus: Protein RecA (354 aa).

67 to 74 (GPESSGKT) is a binding site for ATP.

This sequence belongs to the RecA family.

It is found in the cytoplasm. Functionally, can catalyze the hydrolysis of ATP in the presence of single-stranded DNA, the ATP-dependent uptake of single-stranded DNA by duplex DNA, and the ATP-dependent hybridization of homologous single-stranded DNAs. It interacts with LexA causing its activation and leading to its autocatalytic cleavage. The sequence is that of Protein RecA from Pasteurella multocida (strain Pm70).